The following is a 622-amino-acid chain: Cilia- and flagella-associated protein 206 (622 aa).

Positions 568–593 are disordered; sequence NTSQVYPLKEASTQSKREGSSRVPRP.

The protein belongs to the CFAP206 family. As to expression, expressed in the sperm, oviduct, lung, nasal cavity, brain ependyma and choroid plexus.

Its subcellular location is the cytoplasm. The protein localises to the cytoskeleton. The protein resides in the cilium axoneme. It localises to the cilium basal body. Essential for sperm motility and is involved in the regulation of the beating frequency of motile cilia on the epithelial cells of the respiratory tract. Required for the establishment of radial spokes in sperm flagella. This Mus musculus (Mouse) protein is Cilia- and flagella-associated protein 206.